The following is a 979-amino-acid chain: Calsyntenin-1 (979 aa).

The signal sequence occupies residues 1-28; that stretch reads MLRRPAPALAPAVRLLLAGLLCGGGVWA. The Extracellular portion of the chain corresponds to 29–859; it reads ARVNKHKPWL…PHPFAVVPST (831 aa). Cadherin domains lie at 38–164 and 165–265; these read LEPT…APVF and KEKS…SPGW. N-linked (GlcNAc...) asparagine glycans are attached at residues Asn-346, Asn-366, and Asn-515. Residues 860-880 traverse the membrane as a helical segment; that stretch reads ATVVIVVCVSFLVFMIILGVF. The Cytoplasmic segment spans residues 881-979; that stretch reads RIRAAHQRTM…LEWDDSTLSY (99 aa). Positions 915–979 are disordered; the sequence is METYEDQHSS…LEWDDSTLSY (65 aa). Residues 925–959 are compositionally biased toward acidic residues; that stretch reads EEEEEEEEEEESEDGEEEEDITSAESESSEEEEGG.

It belongs to the calsyntenin family. As to quaternary structure, directly interacts with APBA2. Forms a tripartite complex with APBA2 and APP. The CTF1 chain interacts with PSEN1. Interacts with KLC1 and APBB1. Interacts with APBB1; this interaction stabilizes AlcICD metabolism. In terms of assembly, interacts with PSEN1. In terms of processing, proteolytically processed under normal cellular conditions. A primary zeta-cleavage generates a large extracellular (soluble) N-terminal domain (sAlc) and a short C-terminal transmembrane fragment (CTF1). A secondary cleavage catalyzed by presenilin gamma-secretase within the transmembrane domain releases the beta-Alc-alpha chain in the extracellular milieu and produces an intracellular fragment (AlcICD). Beta-Alc-alpha secretion is largely dependent upon PSEN1 and PSEN2. This processing is strongly suppressed in the tripartite complex formed with APBA2 and APP, which seems to prevent the association with PSEN1. Highly expressed in the brain (at protein level), with over 90% of the neurons expressing detectable amounts. In the brain, relatively high levels in the cerebral cortex, striatum, hippocampus and thalamus. Moderate levels in the cerebellum. Low levels in the olfactory bulb, midbrain and pons (at protein level). Not detected in Purkinje cells. Expressed at low levels in the lung (at protein level). At the mRNA level, weakly detected in the kidney, lung, skeletal muscle, heart and testis. Not expressed in the sciatic nerve fiber.

The protein resides in the postsynaptic cell membrane. The protein localises to the endoplasmic reticulum membrane. Its subcellular location is the golgi apparatus membrane. It localises to the cell projection. It is found in the neuron projection. The protein resides in the vesicle. The protein localises to the nucleus. In terms of biological role, postsynaptic adhesion molecule that binds to presynaptic neurexins to mediate both excitatory and inhibitory synapse formation. Promotes synapse development by acting as a cell adhesion molecule at the postsynaptic membrane, which associates with neurexin-alpha at the presynaptic membrane. Also functions as a cargo in axonal anterograde transport by acting as a molecular adapter that promotes KLC1 association with vesicles. Complex formation with APBA2 and APP, stabilizes APP metabolism and enhances APBA2-mediated suppression of beta-APP40 secretion, due to the retardation of intracellular APP maturation. Its function is as follows. As intracellular fragment AlcICD, suppresses APBB1-dependent transactivation stimulated by APP C-terminal intracellular fragment (AICD), most probably by competing with AICD for APBB1-binding. In complex with APBA2 and C99, a C-terminal APP fragment, abolishes C99 interaction with PSEN1 and thus APP C99 cleavage by gamma-secretase, most probably through stabilization of the direct interaction between APBA2 and APP. The sequence is that of Calsyntenin-1 from Mus musculus (Mouse).